A 464-amino-acid chain; its full sequence is Cell division protein FtsA (464 aa).

The disordered stretch occupies residues 392–464 (EVIESDKDSE…FKKLMKSLFE (73 aa)). Residues 416–455 (KKENDEVAPEAPREESYEDRENHLEDEQQTEGKAKEESKF) are compositionally biased toward basic and acidic residues.

The protein belongs to the FtsA/MreB family. As to quaternary structure, self-interacts. Interacts with FtsZ.

The protein localises to the cell membrane. Cell division protein that is involved in the assembly of the Z ring. May serve as a membrane anchor for the Z ring. This chain is Cell division protein FtsA, found in Staphylococcus epidermidis (strain ATCC 35984 / DSM 28319 / BCRC 17069 / CCUG 31568 / BM 3577 / RP62A).